The sequence spans 169 residues: 3-hydroxyacyl-[acyl-carrier-protein] dehydratase FabZ (169 aa).

Histidine 74 is an active-site residue.

It belongs to the thioester dehydratase family. FabZ subfamily.

The protein resides in the cytoplasm. The catalysed reaction is a (3R)-hydroxyacyl-[ACP] = a (2E)-enoyl-[ACP] + H2O. In terms of biological role, involved in unsaturated fatty acids biosynthesis. Catalyzes the dehydration of short chain beta-hydroxyacyl-ACPs and long chain saturated and unsaturated beta-hydroxyacyl-ACPs. In Gluconobacter oxydans (strain 621H) (Gluconobacter suboxydans), this protein is 3-hydroxyacyl-[acyl-carrier-protein] dehydratase FabZ.